We begin with the raw amino-acid sequence, 265 residues long: Apolipoprotein A-I (265 aa).

Positions 1–18 (MKAVVLAVAALFLAGGEA) are cleaved as a signal peptide. A run of 2 repeats spans residues 68-89 (LKLT…EQLG) and 90-111 (PVTQ…QEMN). The tract at residues 68 to 265 (LKLTENLDTL…EEASKKLSSQ (198 aa)) is 10 X approximate tandem repeats. Met-110 carries the post-translational modification Methionine sulfoxide. A 3; half-length repeat occupies 112-122 (KDLADMKQKVQ). Repeat copies occupy residues 123–144 (PYME…QKVE), 145–166 (PLST…EKLA), and 167–188 (PLGA…TQLA). Residues 189–208 (PYSEQMRERLAERLAALRDS) form a 7; truncated repeat. The residue at position 194 (Met-194) is a Methionine sulfoxide. The stretch at 209-230 (PSLAEYQAKAHEHLKTLHEKAQ) is repeat 8. Residues 231 to 241 (PALSDLGQGVL) form a 9; half-length repeat. Residues 242-265 (PVLESLKATLVGAIEEASKKLSSQ) form repeat 10.

Belongs to the apolipoprotein A1/A4/E family. Homodimer. Interacts with APOA1BP and CLU. Component of a sperm activating protein complex (SPAP), consisting of APOA1, an immunoglobulin heavy chain, an immunoglobulin light chain and albumin. Interacts with NDRG1. Interacts with SCGB3A2. Interacts with NAXE and YJEFN3. In terms of processing, glycosylated. Palmitoylated. Post-translationally, phosphorylation sites are present in the extracellular medium.

It is found in the secreted. In terms of biological role, participates in the reverse transport of cholesterol from tissues to the liver for excretion by promoting cholesterol efflux from tissues and by acting as a cofactor for the lecithin cholesterol acyltransferase (LCAT). As part of the SPAP complex, activates spermatozoa motility. The polypeptide is Apolipoprotein A-I (Apoa1) (Dipodomys ordii (Ord's kangaroo rat)).